The primary structure comprises 518 residues: Probable glycosyltransferase At5g03795 (518 aa).

Topologically, residues 1-25 are cytoplasmic; that stretch reads MGDEDVDGKCKNMSACSSTTSYSTK. A helical; Signal-anchor for type II membrane protein transmembrane segment spans residues 26 to 46; the sequence is LFLFMVPLVVISGFVFVNIGP. Over 47-518 the chain is Lumenal; sequence KDSTSLLTSL…RRLNVKIREV (472 aa). N-linked (GlcNAc...) asparagine glycosylation is found at Asn-104, Asn-113, Asn-120, Asn-282, and Asn-320.

This sequence belongs to the glycosyltransferase 47 family.

The protein resides in the golgi apparatus membrane. May be involved in cell wall biosynthesis. The sequence is that of Probable glycosyltransferase At5g03795 from Arabidopsis thaliana (Mouse-ear cress).